A 201-amino-acid chain; its full sequence is uncharacterized protein (201 aa).

A helical membrane pass occupies residues 11–31 (IIILTIMILTIIIFTRTINGL).

The protein localises to the membrane. This is an uncharacterized protein from Acanthamoeba polyphaga mimivirus (APMV).